Consider the following 784-residue polypeptide: LPS-assembly protein LptD (784 aa).

The first 24 residues, 1–24, serve as a signal peptide directing secretion; it reads MKKRIPTLLATMIATALYSQQGLA. 2 cysteine pairs are disulfide-bonded: Cys31–Cys724 and Cys173–Cys725.

Belongs to the LptD family. As to quaternary structure, component of the lipopolysaccharide transport and assembly complex. Interacts with LptE and LptA. Contains two intramolecular disulfide bonds.

It is found in the cell outer membrane. In terms of biological role, together with LptE, is involved in the assembly of lipopolysaccharide (LPS) at the surface of the outer membrane. The chain is LPS-assembly protein LptD from Shigella flexneri.